A 160-amino-acid polypeptide reads, in one-letter code: Cytochrome b6-f complex subunit 4 (160 aa).

3 helical membrane passes run 36 to 56 (LLYV…GLAI), 95 to 115 (LLGV…PFIE), and 131 to 151 (TVFL…TMPI).

It belongs to the cytochrome b family. PetD subfamily. As to quaternary structure, the 4 large subunits of the cytochrome b6-f complex are cytochrome b6, subunit IV (17 kDa polypeptide, petD), cytochrome f and the Rieske protein, while the 4 small subunits are petG, petL, petM and petN. The complex functions as a dimer.

It is found in the plastid. The protein localises to the chloroplast thylakoid membrane. Component of the cytochrome b6-f complex, which mediates electron transfer between photosystem II (PSII) and photosystem I (PSI), cyclic electron flow around PSI, and state transitions. The polypeptide is Cytochrome b6-f complex subunit 4 (Pyropia yezoensis (Susabi-nori)).